We begin with the raw amino-acid sequence, 746 residues long: MEISALLTSAGINISICIVLLSLYSILRKQPANYCVYFGRRLVCGGARRYDPFWYERFVPSPSWLVKAWETSEDELLAAAGLDAVVFLRMVIFSIRIFFIVAVICIAFVLPVNYYGQPMVHKEIHLESSEVFTIENLKEGSKWLWVHCLALYIITSAACLLLYFEYSTIAKMRLGHITGCASKPSQFTVLIRAIPWSPEQSYSDTLSKFFTNYYSSSYVSHQMVYHNGIIQRLLRDAERMCQTLKHVSPEINCKPSLRPCTFCGGPTATSSFHILSNEADSVKGMELGELTMTTTTTEQERSAAFVFFKTRYDALVVSEVLQSSNPMLWVTDLAPEPHDVYWKNLNIPYRQLWIRKIATLVGAVAFMFVFLIPVTFIQGLTQLVQLSHAFPFLRGILSKNFINQVITGYLPSVILILFFYAVPPLMMYFSALEGCISRSIRKKSACIKVLYFTIWNVFFVNILSGSVIRQLNVFSSVRDIPAQLARAVPTQAGFFMTYCFTSGWASLACEIMQPMALIWNLVAKVVTKNEDESYETLRFPYHTEIPRLLLFGLLGFTNSVIAPLILPFLLIYFFLAYLIYKNQILNVYITKYESGGQYWPIFHNTTIFSLILTQIIALGFFGLKLSTVASGFTIPLILLTLLFSEYCRQRFAPIFNKNPAQVLIDMDRADEISGKMEELHKKLHNVYSQIPLHSQKSSSKAECSNPFKKQELPDPEKLKPEEGDAIAKELWGFQGNESGQEHDTKS.

Transmembrane regions (helical) follow at residues 3-23 (ISALLTSAGINISICIVLLSL), 90-110 (MVIFSIRIFFIVAVICIAFVL), 144-164 (LWVHCLALYIITSAACLLLYF), 357-377 (IATLVGAVAFMFVFLIPVTFI), 405-425 (VITGYLPSVILILFFYAVPPL), 445-465 (ACIKVLYFTIWNVFFVNILSG), 492-512 (AGFFMTYCFTSGWASLACEIM), 560-580 (VIAPLILPFLLIYFFLAYLIY), 601-621 (IFHNTTIFSLILTQIIALGFF), and 623-643 (LKLSTVASGFTIPLILLTLLF). Residues 692-702 (LHSQKSSSKAE) are compositionally biased toward polar residues. A disordered region spans residues 692–723 (LHSQKSSSKAECSNPFKKQELPDPEKLKPEEG). Basic and acidic residues predominate over residues 708-723 (KKQELPDPEKLKPEEG).

The protein belongs to the CSC1 (TC 1.A.17) family.

It is found in the membrane. Its function is as follows. Acts as an osmosensitive calcium-permeable cation channel. In Arabidopsis thaliana (Mouse-ear cress), this protein is Hyperosmolality-gated Ca2+ permeable channel 2.1.